The sequence spans 76 residues: MLAGLRPSIGIVGDALDNALCETTTGPHRTECSHGSPFRSGPIRTLADLEDIASAWVEHTCHTQQGVRIPGRLQPA.

This is an uncharacterized protein from Mycobacterium tuberculosis (strain ATCC 25618 / H37Rv).